Here is a 1141-residue protein sequence, read N- to C-terminus: cGMP-inhibited 3',5'-cyclic phosphodiesterase 3A (1141 aa).

Residues 1–42 (MAVRGEAAQDLAKPGLGGASPARVARGNHRHRGESSPSPRGS) form a disordered region. Residues 62 to 82 (SALCAGSLSVLLALLVRLVGG) form a helical membrane-spanning segment. The tract at residues 90–111 (KSQEAAAEEEEEEGARGGVFPG) is disordered. The next 5 helical transmembrane spans lie at 127–147 (LQPA…GLCL), 157–177 (AVAL…SLGV), 182–202 (LLSL…TWLV), 207–227 (LGVL…VSLE), and 229–249 (FKVA…LLLA). S310 bears the Phosphoserine mark. Positions 433-445 (RVSSTWTTTTSAT) are enriched in low complexity. Residues 433-483 (RVSSTWTTTTSATGLPTLEPAPVRRDRSASIKPHEAPSPSAVNPDSWNAPG) form a disordered region. A compositionally biased stretch (basic and acidic residues) spans 454–467 (PVRRDRSASIKPHE). The segment covering 472-483 (SAVNPDSWNAPG) has biased composition (polar residues). Residues S492, S520, S524, and S533 each carry the phosphoserine modification. Residues 505 to 654 (VKAKKQNRPG…CQREPQRKAS (150 aa)) are disordered. The span at 522–532 (VPSPSSSPPQG) shows a compositional bias: pro residues. Positions 533-544 (SPASSPVSNSAS) are enriched in low complexity. Polar residues predominate over residues 618–637 (TSQVTSDYETNNNSDSSDIL). Positions 669–1141 (KPILAPEPLV…EETLAPQPDL (473 aa)) are interaction with SLFN12. Residues 674-1093 (PEPLVMDNLD…MMWKKVIEEE (420 aa)) enclose the PDEase domain. Catalysis depends on H752, which acts as the Proton donor. Residue H752 participates in AMP binding. H756, H836, D837, and D950 together coordinate Mn(2+). Residues D837, D950, and Q1001 each contribute to the AMP site. D837 contributes to the Mg(2+) binding site. Disordered regions lie at residues 1024–1060 (GKWV…SSIA) and 1120–1141 (KEEE…QPDL). Residues 1029 to 1046 (DSDDSGDTDDPEEEEEEA) are compositionally biased toward acidic residues. S1033 bears the Phosphoserine mark. T1036 carries the phosphothreonine modification. A Glycyl lysine isopeptide (Lys-Gly) (interchain with G-Cter in SUMO2) cross-link involves residue K1120.

It belongs to the cyclic nucleotide phosphodiesterase family. PDE3 subfamily. It depends on Mn(2+) as a cofactor. Requires Mg(2+) as cofactor.

It localises to the membrane. It is found in the cytoplasm. The protein resides in the cytosol. It catalyses the reaction a nucleoside 3',5'-cyclic phosphate + H2O = a nucleoside 5'-phosphate + H(+). The catalysed reaction is 3',5'-cyclic AMP + H2O = AMP + H(+). The enzyme catalyses 3',5'-cyclic GMP + H2O = GMP + H(+). It carries out the reaction 3',5'-cyclic UMP + H2O = UMP + H(+). Its activity is regulated as follows. Inhibited by cGMP. Its function is as follows. Cyclic nucleotide phosphodiesterase with specificity for the second messengers cAMP and cGMP, which are key regulators of many important physiological processes. Also has activity toward cUMP. Independently of its catalytic activity it is part of an E2/17beta-estradiol-induced pro-apoptotic signaling pathway. E2 stabilizes the PDE3A/SLFN12 complex in the cytosol, promoting the dephosphorylation of SLFN12 and activating its pro-apoptotic ribosomal RNA/rRNA ribonuclease activity. This apoptotic pathway might be relevant in tissues with high concentration of E2 and be for instance involved in placenta remodeling. This Mus musculus (Mouse) protein is cGMP-inhibited 3',5'-cyclic phosphodiesterase 3A.